Reading from the N-terminus, the 261-residue chain is Aminoglycoside N(3)-acetyltransferase IV (261 aa).

Belongs to the antibiotic N-acetyltransferase family.

The enzyme catalyses a 2-deoxystreptamine antibiotic + acetyl-CoA = an N(3)-acetyl-2-deoxystreptamine antibiotic + CoA + H(+). Functionally, resistance to antibiotics containing the 2-deoxy-streptamine ring including gentamicin, kanamycin, tobramycin, neomycin and apramycin. The protein is Aminoglycoside N(3)-acetyltransferase IV (aacC4) of Salmonella sp.